Reading from the N-terminus, the 842-residue chain is Netrin receptor UNC5A (842 aa).

A signal peptide spans 1-25; the sequence is MAVRPGLWPALLGIVLAAWLRGSGA. At 26-306 the chain is on the extracellular side; it reads QQSATVANPV…ASGPEDVALY (281 aa). An Ig-like domain is found at 44 to 141; it reads PHFLVEPEDV…SGTTKSQKAY (98 aa). 3 cysteine pairs are disulfide-bonded: cysteine 65-cysteine 126, cysteine 77-cysteine 124, and cysteine 170-cysteine 221. Asparagine 107 and asparagine 218 each carry an N-linked (GlcNAc...) asparagine glycan. The Ig-like C2-type domain maps to 155-234; it reads PLAKEVSLEQ…NIVARRRSAS (80 aa). The region spanning 242-294 is the TSP type-1 domain; the sequence is DGSWSPWSKWSACGLDCTHWRSRECSDPAPRNGGEECQGTDLDTRNCTSDLCV. C-linked (Man) tryptophan glycans are attached at residues tryptophan 245, tryptophan 248, and tryptophan 251. Disulfide bonds link cysteine 254–cysteine 288, cysteine 258–cysteine 293, and cysteine 266–cysteine 278. The N-linked (GlcNAc...) asparagine glycan is linked to asparagine 287. A helical membrane pass occupies residues 307 to 327; sequence VGLIAVAVCLVLLLLVLILVY. At 328–842 the chain is on the cytoplasmic side; sequence CRKKEGLDSD…GLFTVSEAEC (515 aa). The 144-residue stretch at 441 to 584 folds into the ZU5 domain; it reads NMTYGTFNFL…LGRFALVGEA (144 aa). An interaction with DCC region spans residues 605–623; that stretch reads SLEYNIRVYCLHDTHDALK. Positions 761 to 841 constitute a Death domain; that stretch reads QKIISSLDPP…AGLFTVSEAE (81 aa).

Belongs to the unc-5 family. In terms of assembly, homodimer and homooligomer. Interacts with the cytoplasmic part of DCC. Interacts with MAGED1. Interacts with PRKCABP, possibly mediating some interaction with PKC. Interacts (via extracellular domain) with FLRT2 (via extracellular domain). Interacts (via extracellular domain) with FLRT3 (via extracellular domain). Post-translationally, phosphorylated on cytoplasmic tyrosine residues. Phosphorylated by PKC in vitro. In terms of processing, proteolytically cleaved by caspases during apoptosis. The cleavage does not take place when the receptor is associated with netrin ligand. Its cleavage by caspases is required to induce apoptosis. The two extracellular TSRs of UNC5A contain WxxWxxWxxC motifs that can be C-mannosylated on all tryptophans. DPY19L1 preferentially mannosylates the first two tryptophans and DPY19L3 prefers the third. C-mannosylation by DPY19L1 is required for transport of UNC5A from the endoplasmic reticulum to the cell surface.

Its subcellular location is the cell membrane. The protein localises to the membrane raft. It localises to the cell projection. It is found in the neuron projection. In terms of biological role, receptor for netrin required for axon guidance. Functions in the netrin signaling pathway and promotes neurite outgrowth in response to NTN1. Mediates axon repulsion of neuronal growth cones in the developing nervous system in response to netrin. Axon repulsion in growth cones may be mediated by its association with DCC that may trigger signaling for repulsion. It also acts as a dependence receptor required for apoptosis induction when not associated with netrin ligand. This chain is Netrin receptor UNC5A (UNC5A), found in Homo sapiens (Human).